The chain runs to 413 residues: FAD-dependent monooxygenase vrtH (413 aa).

The first 23 residues, 1–23 (MQRANHTRPVLIIGAGLSGLAIG), serve as a signal peptide directing secretion. Asn5 is a glycosylation site (N-linked (GlcNAc...) asparagine). FAD is bound by residues Glu37 and Ala48. A glycan (N-linked (GlcNAc...) asparagine) is linked at Asn94. FAD is bound at residue Arg120. Asn232 carries an N-linked (GlcNAc...) asparagine glycan. 2 residues coordinate FAD: Asp327 and Gly340.

The protein belongs to the paxM FAD-dependent monooxygenase family. Requires FAD as cofactor.

Its pathway is secondary metabolite biosynthesis; terpenoid biosynthesis. FAD-dependent monooxygenase; part of the gene cluster that mediates the biosynthesis of viridicatumtoxin, a tetracycline-like fungal meroterpenoid with a unique, fused spirobicyclic ring system. The first step of the pathway is the production of the malonamoyl-CoA starter unit for the polyketide synthase vrtA. The aldolase vrtJ may be involved in the synthesis of the malonamate substrate for malonamoyl-CoA synthetase vrtB. The polyketide synthase vrtA then may utilize the malonamoyl-CoA starter unit, followed by sequential condensation of eight malonyl-CoA units to form the polyketide backbone. The cyclization of the last ring could be mediated by the lactamase-like protein vrtG. The proposed post-PKS tailoring steps are a hydroxylation at C5 catalyzed the cytochrome P450 monooxygenase vrtE, a hydroxylation at C12a catalyzed by VrtH and/or VrtI, and an O-methylation by the O-methyltransferase vrtF. VrtC is then proposed to catalyze the transfer of a geranyl group synthesized by vrtD to the aromatic C ring of the tetracyclic polyketide intermediate of viridicatumtoxin to yield previridicatumtoxin. Finally, the cytochrome P450 monooxygenase vrtK catalyzes the spirocyclization of the geranyl moiety of previridicatumtoxin to afford viridicatumtoxin. In Penicillium aethiopicum, this protein is FAD-dependent monooxygenase vrtH.